The chain runs to 472 residues: Glycine--tRNA ligase (472 aa).

2 residues coordinate substrate: R109 and E174. ATP is bound by residues 206–208 (RNE), 216–221 (FRTREF), 293–294 (EL), and 337–340 (GLTR). 221-225 (FEQME) lines the substrate pocket. 333-337 (EPAAG) contacts substrate.

This sequence belongs to the class-II aminoacyl-tRNA synthetase family. In terms of assembly, homodimer.

It is found in the cytoplasm. The catalysed reaction is tRNA(Gly) + glycine + ATP = glycyl-tRNA(Gly) + AMP + diphosphate. In terms of biological role, catalyzes the attachment of glycine to tRNA(Gly). The polypeptide is Glycine--tRNA ligase (Cutibacterium acnes (strain DSM 16379 / KPA171202) (Propionibacterium acnes)).